We begin with the raw amino-acid sequence, 283 residues long: Protoheme IX farnesyltransferase 1 (283 aa).

The next 9 membrane-spanning stretches (helical) occupy residues 14–34, 35–55, 84–104, 107–127, 133–153, 163–183, 208–228, 231–251, and 258–278; these read IALM…TKVD, PVAL…SAVF, LGFA…NAAF, VVAL…TVWL, TNII…AAAV, VLAL…AILL, ILAN…LGLL, VYGF…VVLV, and WAGW…IAVF.

Belongs to the UbiA prenyltransferase family. Protoheme IX farnesyltransferase subfamily.

The protein localises to the cell inner membrane. It catalyses the reaction heme b + (2E,6E)-farnesyl diphosphate + H2O = Fe(II)-heme o + diphosphate. It functions in the pathway porphyrin-containing compound metabolism; heme O biosynthesis; heme O from protoheme: step 1/1. Functionally, converts heme B (protoheme IX) to heme O by substitution of the vinyl group on carbon 2 of heme B porphyrin ring with a hydroxyethyl farnesyl side group. This chain is Protoheme IX farnesyltransferase 1, found in Paramagnetospirillum magneticum (strain ATCC 700264 / AMB-1) (Magnetospirillum magneticum).